Reading from the N-terminus, the 215-residue chain is Thymidylate kinase (215 aa).

12–19 (GIDGAGKS) contributes to the ATP binding site.

Belongs to the thymidylate kinase family.

The enzyme catalyses dTMP + ATP = dTDP + ADP. In terms of biological role, phosphorylation of dTMP to form dTDP in both de novo and salvage pathways of dTTP synthesis. This is Thymidylate kinase from Albidiferax ferrireducens (strain ATCC BAA-621 / DSM 15236 / T118) (Rhodoferax ferrireducens).